A 429-amino-acid chain; its full sequence is MRDALNTGLIEFLKASPTPFHATASLVQRLEAAGYKRLDERDSWDTETGGRYYVTRNDSSIIAIKLGKQSPLLNGIRMVGAHTDSPCLRVKPQPELQRQGFLQLGVEVYGGALLAPWFDRDLSLAGRVTYRRDGKVESQLIDFKLPVAIIPNLAIHLNRTANEGWAINPQNELPPILAQVAGDERIDFRALLTEQLAREHELIADVVLDYELSFYDTQDAALIGLNGDFIAGARLDNLLSCYAGLQALLAADSDETCVLVCNDHEEVGSCSACGADGPMLEQTLQRLLPDGDTYVRTVQRSLMVSADNAHGVHPNYADKHDGNHGPKLNAGPVIKVNNNQRYATNSETAGFFRHLCMAEEVPVQSFVVRSDMGCGSTIGPITASHLGVRTVDIGLPTFAMHSIRELCGSHDLAHLVKVLTAFYRSRELP.

3 residues coordinate Zn(2+): His-82, His-156, and His-401.

It belongs to the peptidase M18 family. It depends on Zn(2+) as a cofactor.

This Pseudomonas putida (strain ATCC 47054 / DSM 6125 / CFBP 8728 / NCIMB 11950 / KT2440) protein is Probable M18 family aminopeptidase 2.